The following is a 92-amino-acid chain: Probable Fe(2+)-trafficking protein (92 aa).

It belongs to the Fe(2+)-trafficking protein family.

Could be a mediator in iron transactions between iron acquisition and iron-requiring processes, such as synthesis and/or repair of Fe-S clusters in biosynthetic enzymes. This is Probable Fe(2+)-trafficking protein from Anaeromyxobacter sp. (strain Fw109-5).